The sequence spans 92 residues: MQVLVRDNNVDQALRVLKKKMQREGVFREMKQRRSYEKPSERKTREKSEAIRRARKLARKQAIREGLLPAPPKKKLPERKPPLPQTAARPAG.

Positions 25 to 52 (GVFREMKQRRSYEKPSERKTREKSEAIR) are enriched in basic and acidic residues. The disordered stretch occupies residues 25–92 (GVFREMKQRR…LPQTAARPAG (68 aa)).

The protein belongs to the bacterial ribosomal protein bS21 family.

The sequence is that of Small ribosomal subunit protein bS21A from Bradyrhizobium diazoefficiens (strain JCM 10833 / BCRC 13528 / IAM 13628 / NBRC 14792 / USDA 110).